Here is a 357-residue protein sequence, read N- to C-terminus: Membrane-bound lytic murein transglycosylase C (357 aa).

A signal peptide spans 1 to 15 (MKKYLLLALLPFLYA). C16 carries the N-palmitoyl cysteine lipid modification. C16 is lipidated: S-diacylglycerol cysteine.

Belongs to the transglycosylase Slt family.

The protein localises to the cell outer membrane. The catalysed reaction is Exolytic cleavage of the (1-&gt;4)-beta-glycosidic linkage between N-acetylmuramic acid (MurNAc) and N-acetylglucosamine (GlcNAc) residues in peptidoglycan, from either the reducing or the non-reducing ends of the peptidoglycan chains, with concomitant formation of a 1,6-anhydrobond in the MurNAc residue.. In terms of biological role, murein-degrading enzyme. May play a role in recycling of muropeptides during cell elongation and/or cell division. The polypeptide is Membrane-bound lytic murein transglycosylase C (Haemophilus influenzae (strain 86-028NP)).